Reading from the N-terminus, the 331-residue chain is MIDKSIPLVDLHRHLDGNVRVQTIWELGHQHGIALPAQSLAELAPFVQIQGKENSLVAFLKKLDWMVAVLADLDAVKRVAYENVADAALSGLDYAELRFSPYYMAMNHNLPIEGVVEAVIDGVNAGLKDHAVKINLIGIMSRSFGQEKCLLELEGLLAHKDKLVAMDLAGDELGFPGDLFNDHFKRVRDAGLAITAHAGEAAGSESMWQAIQTLGATRIGHGVNAIHDPKLMEYLVKHKIGIESCPTSNLHTSTVDNYDVHPLRTFLDAGVLIGLNTDDPGVSNIDIAHEYRVVKSEMGFSDAQLAQLQRNGVEMAFMSDSDRKALYAAKA.

2 residues coordinate Zn(2+): His-12 and His-14. 3 residues coordinate substrate: His-14, Asp-16, and Gly-170. His-197 is a binding site for Zn(2+). Catalysis depends on Glu-200, which acts as the Proton donor. Asp-278 is a Zn(2+) binding site. Asp-279 contributes to the substrate binding site.

Belongs to the metallo-dependent hydrolases superfamily. Adenosine and AMP deaminases family. Adenosine deaminase subfamily. Requires Zn(2+) as cofactor.

It catalyses the reaction adenosine + H2O + H(+) = inosine + NH4(+). The enzyme catalyses 2'-deoxyadenosine + H2O + H(+) = 2'-deoxyinosine + NH4(+). Catalyzes the hydrolytic deamination of adenosine and 2-deoxyadenosine. This is Adenosine deaminase from Shewanella denitrificans (strain OS217 / ATCC BAA-1090 / DSM 15013).